The primary structure comprises 154 residues: Ubiquitin-like protein 4A-A (154 aa).

One can recognise a Ubiquitin-like domain in the interval Met-1 to Glu-76.

As to quaternary structure, component of the BAT3 complex.

It is found in the cytoplasm. The protein resides in the cytosol. Its function is as follows. Component of the BAT3 complex, a multiprotein complex involved in the post-translational delivery of tail-anchored (TA) membrane proteins to the endoplasmic reticulum membrane. TA membrane proteins, also named type II transmembrane proteins, contain a single C-terminal transmembrane region. The chain is Ubiquitin-like protein 4A-A (ubl4aa) from Salmo salar (Atlantic salmon).